Consider the following 744-residue polypeptide: Junctophilin-3 (744 aa).

Topologically, residues 1–723 are cytoplasmic; it reads MSSGGRFNFD…LKSSTGSAPI (723 aa). MORN repeat units follow at residues 15–37, 39–60, 61–82, 83–105, 107–129, and 130–152; these read YCGG…KGQG, YTGS…SGNT, YQGT…GKWV, YKGE…GNGA, YEGT…DGGT, and YQGQ…PYGM. Residues 230-252 are disordered; the sequence is SKSSLASQRSKQSSFRSEAGMST. Low complexity predominate over residues 231-244; it reads KSSLASQRSKQSSF. 2 MORN repeats span residues 288 to 310 and 311 to 333; these read YVGE…DGLK and YEGE…DGTK. Ser-440 is subject to Phosphoserine. Thr-451 is subject to Phosphothreonine. Disordered regions lie at residues 451–603 and 624–677; these read TPLQ…LLEP and CPQD…ESLR. Ser-457 carries the post-translational modification Phosphoserine. Thr-471 is subject to Phosphothreonine. Residues Ser-475 and Ser-506 each carry the phosphoserine modification. Phosphoserine is present on residues Ser-699 and Ser-706. A helical; Anchor for type IV membrane protein transmembrane segment spans residues 724 to 744; the sequence is LVVMVILLNIGVAILFINFFI.

Belongs to the junctophilin family. Specifically expressed in brain. Highest levels in the olfactory tubercle, caudate putamen, nucleus accumbens, hippocampal formation, piriform cortex and cerebellar cortex. Expressed in disctete neurons sites. In hippocampal formation, expressed in dendrites of hippocampal pyramidal and denate granule cells. In cerebellum, it is highly expressed in Purkinge cells, while it is weakly expressed in granular cells.

The protein localises to the cell membrane. It localises to the endoplasmic reticulum membrane. Functionally, junctophilins contribute to the formation of junctional membrane complexes (JMCs) which link the plasma membrane with the endoplasmic or sarcoplasmic reticulum in excitable cells. Provides a structural foundation for functional cross-talk between the cell surface and intracellular calcium release channels. JPH3 is brain-specific and appears to have an active role in certain neurons involved in motor coordination and memory. The polypeptide is Junctophilin-3 (Jph3) (Mus musculus (Mouse)).